The sequence spans 361 residues: MKALILVGGFGTRLRPLTLSFPKPLVDFANKPMILHQIEALKEVGVTEVVLAINYRPEVMLNFLKDFEDKLGITITCSQETEPLGTAGPLALARDKLVDGSGEPFFVLNSDVISEYPFAELIKFHKNHGGEATIMVTKVDEPSKYGVVVMEEATGMVEKFVEKPKIFVGNKINAGIYLLNPSVLDRIELKPTSIEKEVFPRISADAKLFAMVLPGFWMDVGQPRDYITGLRLYLDSLRKRSANRLATGAHIVGNVLVHESAKIGEGCLIGPDVAIGPGCVVEDGVRLSRCTVMRGVRIKKHACISNSIIGWHSTVGQWARIENMTILGEDVHVGDEVYTNGGVILPHKEIKSSILKPEIVM.

The GDP-alpha-D-mannose site is built by Leu-6 and Val-7. Diphosphate contacts are provided by Gly-9, Gly-11, Thr-12, Arg-13, and Lys-23. Residues Gly-85, Asn-109, Asp-111, Gly-146, and Asn-173 each contribute to the GDP-alpha-D-mannose site.

It belongs to the transferase hexapeptide repeat family.

The catalysed reaction is alpha-D-mannose 1-phosphate + GTP + H(+) = GDP-alpha-D-mannose + diphosphate. It functions in the pathway nucleotide-sugar biosynthesis; GDP-alpha-D-mannose biosynthesis; GDP-alpha-D-mannose from alpha-D-mannose 1-phosphate (GTP route): step 1/1. Its function is as follows. Catalyzes a reaction of the Smirnoff-Wheeler pathway, the major route to ascorbate biosynthesis in plants. This chain is Probable mannose-1-phosphate guanylyltransferase 3, found in Oryza sativa subsp. japonica (Rice).